Here is a 76-residue protein sequence, read N- to C-terminus: Esculentin-2MT3 (76 aa).

The signal sequence occupies residues 1–22 (MFTLKKSMLLLFFLGTISLSLC). The propeptide at 23–37 (EEERNADEDDGEKEV) is removed in mature form. C70 and C76 are joined by a disulfide.

This sequence belongs to the frog skin active peptide (FSAP) family. Esculentin subfamily. In terms of tissue distribution, expressed by the skin glands.

The protein localises to the secreted. In terms of biological role, antimicrobial peptide. In Amolops mantzorum (Sichuan torrent frog), this protein is Esculentin-2MT3.